Here is a 238-residue protein sequence, read N- to C-terminus: Small ribosomal subunit protein eS4 (238 aa).

Residues 38–109 (IPLALVIRDV…DERSYYALVP (72 aa)) form the S4 RNA-binding domain.

The protein belongs to the eukaryotic ribosomal protein eS4 family.

This chain is Small ribosomal subunit protein eS4, found in Pyrobaculum neutrophilum (strain DSM 2338 / JCM 9278 / NBRC 100436 / V24Sta) (Thermoproteus neutrophilus).